Here is a 209-residue protein sequence, read N- to C-terminus: MVNFVSAGLFRCLPVSCPEDLLVEELVDGLLSLEEELKDKEEEEAVLDGLLSLEEESRGRLRRGPPGEKAPPRGETHRDRQRRAEEKRKRKKEREKEEEKQTAEYLKRKEEEKARRRRRAEKKAADVARRKQEEQERRERKWRQGAEKAKQHSARKEKMQELGIDGYTRQLEGEVESLEAERRKLLQEKEDLMGEVNYWQGRLEAMWLQ.

Positions 48–162 (DGLLSLEEES…SARKEKMQEL (115 aa)) are disordered. 2 stretches are compositionally biased toward basic and acidic residues: residues 70–87 (APPRGETHRDRQRRAEEK) and 94–114 (REKEEEKQTAEYLKRKEEEKA). The Nuclear localization signal 1 signature appears at 87–92 (KRKRKK). 2 consecutive short sequence motifs (nuclear localization signal) follow at residues 116–120 (RRRRA) and 137–141 (RRERK). The segment covering 122–160 (KKAADVARRKQEEQERRERKWRQGAEKAKQHSARKEKMQ) has biased composition (basic and acidic residues).

It belongs to the HTLV-1 HBZ protein family. As to quaternary structure, interacts with host ATF4; this interaction inhibits viral RNA transcriptional activation by preventing ATF4 binding to Tax-responsive elements. Interacts with host CREB1; this interaction inhibits host CREB1 transcriptional activity. Interacts with host JUN, JUNB and JUND. Interacts with host EP300.

The protein localises to the host nucleus. Functionally, contributes to the regulation of viral RNA transcription by interacting with host proteins involved in transcriptional activation such as ATF4, or CREB1, and by inhibiting their activity. Additionally, HBZ suppresses host NF-kappa-B-driven transcription mediated by host RELA as well as transcription of some classical NF-kappa-B target genes, including IL8, IL2RA, IRF4, VCAM1, and VEGFA. This Homo sapiens (Human) protein is HTLV-1 basic zipper factor (HBZ).